A 158-amino-acid polypeptide reads, in one-letter code: S-ribosylhomocysteine lyase (158 aa).

Fe cation contacts are provided by H54, H58, and C125.

It belongs to the LuxS family. In terms of assembly, homodimer. It depends on Fe cation as a cofactor.

It carries out the reaction S-(5-deoxy-D-ribos-5-yl)-L-homocysteine = (S)-4,5-dihydroxypentane-2,3-dione + L-homocysteine. Involved in the synthesis of autoinducer 2 (AI-2) which is secreted by bacteria and is used to communicate both the cell density and the metabolic potential of the environment. The regulation of gene expression in response to changes in cell density is called quorum sensing. Catalyzes the transformation of S-ribosylhomocysteine (RHC) to homocysteine (HC) and 4,5-dihydroxy-2,3-pentadione (DPD). This is S-ribosylhomocysteine lyase from Lactococcus lactis subsp. cremoris (strain MG1363).